Reading from the N-terminus, the 166-residue chain is EndA-like protein (166 aa).

The protein belongs to the tRNA-intron endonuclease family. Archaeal short subfamily.

This chain is EndA-like protein, found in Methanopyrus kandleri (strain AV19 / DSM 6324 / JCM 9639 / NBRC 100938).